The primary structure comprises 250 residues: tRNA (guanine-N(1)-)-methyltransferase (250 aa).

Residues Gly-116 and 136–141 (IGDYVL) contribute to the S-adenosyl-L-methionine site.

It belongs to the RNA methyltransferase TrmD family. As to quaternary structure, homodimer.

Its subcellular location is the cytoplasm. The catalysed reaction is guanosine(37) in tRNA + S-adenosyl-L-methionine = N(1)-methylguanosine(37) in tRNA + S-adenosyl-L-homocysteine + H(+). Its function is as follows. Specifically methylates guanosine-37 in various tRNAs. The polypeptide is tRNA (guanine-N(1)-)-methyltransferase (Pseudomonas fluorescens (strain ATCC BAA-477 / NRRL B-23932 / Pf-5)).